We begin with the raw amino-acid sequence, 446 residues long: Glutamine synthetase (446 aa).

Residues 18-103 (ENVRYLRLQF…LICDVYKTDG (86 aa)) form the GS beta-grasp domain. The GS catalytic domain occupies 110-446 (PRANLKRVLK…WERDQYMKQY (337 aa)). Mg(2+) contacts are provided by Glu134 and Glu136. Residue Glu186 participates in ATP binding. Mg(2+)-binding residues include Glu191 and Glu198. Residues 242–243 (NG) and Gly243 contribute to the L-glutamate site. His247 contributes to the Mg(2+) binding site. Ser251 is an ATP binding site. The L-glutamate site is built by Arg300, Glu306, and Arg318. Residues Arg318 and Arg323 each coordinate ATP. Glu335 serves as a coordination point for Mg(2+). Arg337 provides a ligand contact to L-glutamate.

It belongs to the glutamine synthetase family. In terms of assembly, oligomer of 12 subunits arranged in the form of two hexagons. In its feedback-inhibited form, interacts with TnrA in order to block its DNA-binding activity. Mg(2+) serves as cofactor.

The protein resides in the cytoplasm. The catalysed reaction is L-glutamate + NH4(+) + ATP = L-glutamine + ADP + phosphate + H(+). With respect to regulation, inhibited by glutamine. Glutamine synthetase (GS) is an unusual multitasking protein that functions as an enzyme, a transcription coregulator, and a chaperone in ammonium assimilation and in the regulation of genes involved in nitrogen metabolism. It catalyzes the ATP-dependent biosynthesis of glutamine from glutamate and ammonia. Feedback-inhibited GlnA also interacts with and regulates the activity of the transcriptional regulator TnrA. During nitrogen limitation, TnrA is in its DNA-binding active state and turns on the transcription of genes required for nitrogen assimilation. Under conditions of nitrogen excess, feedback-inhibited GlnA forms a stable complex with TnrA, which inhibits its DNA-binding activity. In contrast, feedback-inhibited GlnA acts as a chaperone to stabilize the DNA-binding activity of GlnR, which represses the transcription of nitrogen assimilation genes. The protein is Glutamine synthetase of Staphylococcus aureus (strain N315).